A 190-amino-acid polypeptide reads, in one-letter code: MKSTLRPALVLFAVLTLICGVIYPYAITGIGKLAFSEQAEGSLVSRNGQIVGSSLIGQAFSSPQYFWGRPSATSPMPNNAAASSGSNQGPLNLALIDSVKGRIAALKAADPANTLPVPVDLVTASASGLDPEISLAAAKYQAARIALARKMQLEEVQSIIDRHSKAQYFGFFGEPRVNVLALNLALDQHH.

The helical transmembrane segment at 10-30 threads the bilayer; that stretch reads VLFAVLTLICGVIYPYAITGI.

It belongs to the KdpC family. The system is composed of three essential subunits: KdpA, KdpB and KdpC.

The protein localises to the cell inner membrane. Part of the high-affinity ATP-driven potassium transport (or Kdp) system, which catalyzes the hydrolysis of ATP coupled with the electrogenic transport of potassium into the cytoplasm. This subunit acts as a catalytic chaperone that increases the ATP-binding affinity of the ATP-hydrolyzing subunit KdpB by the formation of a transient KdpB/KdpC/ATP ternary complex. This Herminiimonas arsenicoxydans protein is Potassium-transporting ATPase KdpC subunit.